The chain runs to 271 residues: Phosphonates import ATP-binding protein PhnC 2 (271 aa).

The ABC transporter domain maps to 2-246 (LTVDNLEKTY…ARDEIYRGGE (245 aa)). 35-42 (GPSGAGKS) is a binding site for ATP. The span at 243-254 (RGGESIADREEP) shows a compositional bias: basic and acidic residues. Residues 243 to 271 (RGGESIADREEPSAGNSTDADDVIAERGD) are disordered.

It belongs to the ABC transporter superfamily. Phosphonates importer (TC 3.A.1.9.1) family. The complex is composed of two ATP-binding proteins (PhnC), two transmembrane proteins (PhnE) and a solute-binding protein (PhnD).

It is found in the cell membrane. The enzyme catalyses phosphonate(out) + ATP + H2O = phosphonate(in) + ADP + phosphate + H(+). Its function is as follows. Part of the ABC transporter complex PhnCDE involved in phosphonates import. Responsible for energy coupling to the transport system. This Haloarcula marismortui (strain ATCC 43049 / DSM 3752 / JCM 8966 / VKM B-1809) (Halobacterium marismortui) protein is Phosphonates import ATP-binding protein PhnC 2.